Here is a 210-residue protein sequence, read N- to C-terminus: Glutathione S-transferase P (210 aa).

The region spanning Pro-2 to Gly-81 is the GST N-terminal domain. Phosphotyrosine; by EGFR is present on Tyr-4. Residues Tyr-8, Arg-14, Trp-39, Lys-45, and Gln-52–Leu-53 contribute to the glutathione site. Thr-62 bears the Phosphothreonine mark. Residue Gln-65 to Ser-66 coordinates glutathione. The region spanning Asp-83–Ile-204 is the GST C-terminal domain. N6-succinyllysine is present on residues Lys-103 and Lys-116. Lys-128 is subject to N6-acetyllysine.

This sequence belongs to the GST superfamily. Pi family. As to quaternary structure, homodimer. Interacts with CDK5.

It is found in the cytoplasm. Its subcellular location is the mitochondrion. It localises to the nucleus. It catalyses the reaction RX + glutathione = an S-substituted glutathione + a halide anion + H(+). The catalysed reaction is prostaglandin J2 + glutathione = prostaglandin J2-S-(R)-glutathione. It carries out the reaction prostaglandin J2 + glutathione = prostaglandin J2-S-(S)-glutathione. The enzyme catalyses prostaglandin A2 + glutathione = prostaglandin A2-S-(S)-glutathione. It catalyses the reaction 11(S)-hydroxy-14(S),15(S)-epoxy-(5Z,8Z,12E)-eicosatrienoate + glutathione = (11S,15S)-dihydroxy-14(R)-S-glutathionyl-(5Z,8Z,12E)-eicosatrienoate. Conjugation of reduced glutathione to a wide number of exogenous and endogenous hydrophobic electrophiles. Involved in the formation of glutathione conjugates of both prostaglandin A2 (PGA2) and prostaglandin J2 (PGJ2). Participates in the formation of novel hepoxilin regioisomers. Negatively regulates CDK5 activity via p25/p35 translocation to prevent neurodegeneration. The chain is Glutathione S-transferase P (GSTP1) from Pongo abelii (Sumatran orangutan).